Here is a 276-residue protein sequence, read N- to C-terminus: Large ribosomal subunit protein uL2 (276 aa).

Residues 223–276 (AVMNPVDHPHGGGEGKNSVGRKSPLTPWGKPALGIKTRGRKTSDKFIVRRRNEK) are disordered. The span at 263–276 (KTSDKFIVRRRNEK) shows a compositional bias: basic and acidic residues.

Belongs to the universal ribosomal protein uL2 family. In terms of assembly, part of the 50S ribosomal subunit. Forms a bridge to the 30S subunit in the 70S ribosome.

One of the primary rRNA binding proteins. Required for association of the 30S and 50S subunits to form the 70S ribosome, for tRNA binding and peptide bond formation. It has been suggested to have peptidyltransferase activity; this is somewhat controversial. Makes several contacts with the 16S rRNA in the 70S ribosome. The polypeptide is Large ribosomal subunit protein uL2 (Fusobacterium nucleatum subsp. nucleatum (strain ATCC 25586 / DSM 15643 / BCRC 10681 / CIP 101130 / JCM 8532 / KCTC 2640 / LMG 13131 / VPI 4355)).